Here is an 814-residue protein sequence, read N- to C-terminus: Echinoderm microtubule-associated protein-like 1 (814 aa).

Residues 31–72 (SMEISDRIASLEQRVQMQEDDIQLLKSALADVVRRLNITEEQ) are a coiled coil. The segment at 77-185 (NRKGPTKARP…EPTFSPEEGY (109 aa)) is disordered. Polar residues predominate over residues 92–101 (PLRTTVNNGT). Residues 103 to 115 (LPKKPSASLPSPS) are compositionally biased toward low complexity. The residue at position 113 (Ser113) is a Phosphoserine. Over residues 127 to 137 (KSINRTSSSER) the composition is skewed to polar residues. Over residues 142 to 152 (GRRESSGDSKG) the composition is skewed to basic and acidic residues. Residues 155 to 167 (NRTGSTSSSSSGK) are compositionally biased toward low complexity. A tandem atypical propeller in EMLs region spans residues 175–814 (KEPTFSPEEG…DTSIMQWRVI (640 aa)). 12 WD repeats span residues 260 to 309 (EQLQ…IWDS), 314 to 357 (TLHV…VWDW), 362 to 399 (RLAD…FWTL), 408 to 445 (QGLF…VWGK), 449 to 488 (RISY…SWNG), 492 to 529 (KLHK…LQGT), 534 to 571 (FTPI…LWDA), 577 to 612 (VWDK…VFDT), 616 to 654 (DLVT…IYGV), 663 to 700 (RVGK…YWVP), 708 to 767 (SVET…LFSY), and 774 to 813 (APSH…QWRV).

The protein belongs to the WD repeat EMAP family. As to quaternary structure, homotrimer; self-association is mediated by the N-terminal coiled coil. Does not interact with EML3. Binds repolymerizing microtubules. Binds unpolymerized tubulins via its WD repeat region. Interacts with TASOR.

Its subcellular location is the cytoplasm. The protein resides in the perinuclear region. It localises to the cytoskeleton. Its function is as follows. Modulates the assembly and organization of the microtubule cytoskeleton, and probably plays a role in regulating the orientation of the mitotic spindle and the orientation of the plane of cell division. Required for normal proliferation of neuronal progenitor cells in the developing brain and for normal brain development. Does not affect neuron migration per se. The protein is Echinoderm microtubule-associated protein-like 1 (Eml1) of Rattus norvegicus (Rat).